The following is a 314-amino-acid chain: Ecto-ADP-ribosyltransferase 4 (314 aa).

A signal peptide spans 1–46 (MGPLINRCKKILLPTTVPPATMRIWLLGGPLPFLLLLSGLQRPTEG). 2 disulfides stabilise this stretch: C69/C280 and C182/C231. The TR mART core domain occupies 91-276 (KNYFRMWQKA…LQLRSTGNLS (186 aa)). N114 carries N-linked (GlcNAc...) asparagine glycosylation. Y126 contributes to the NAD(+) binding site. The N-linked (GlcNAc...) asparagine glycan is linked to N178. Q206 lines the NAD(+) pocket. N-linked (GlcNAc...) asparagine glycosylation is present at N222. S240 lines the NAD(+) pocket. Residues N257 and N274 are each glycosylated (N-linked (GlcNAc...) asparagine). A285 is lipidated: GPI-anchor amidated alanine. Residues 286-314 (SSKKCIPDPIAIASLSFLTSVIIFSKSRV) constitute a propeptide, removed in mature form.

The protein belongs to the Arg-specific ADP-ribosyltransferase family.

The protein localises to the cell membrane. The enzyme catalyses L-arginyl-[protein] + NAD(+) = N(omega)-(ADP-D-ribosyl)-L-arginyl-[protein] + nicotinamide + H(+). The protein is Ecto-ADP-ribosyltransferase 4 (ART4) of Pan troglodytes (Chimpanzee).